We begin with the raw amino-acid sequence, 259 residues long: Phosphatidylglycerol--prolipoprotein diacylglyceryl transferase (259 aa).

Helical transmembrane passes span 12–32 (LSLHWYAVCILVGLLLAVYLA), 46–66 (IIDFILIAFPLAIIGARIYYV), 83–103 (IWNGGIAIYGGLITGTIVLFV), and 109–129 (VLNPIHFLDIAAPSVMLAQAI). Arg-131 is an a 1,2-diacyl-sn-glycero-3-phospho-(1'-sn-glycerol) binding site. 3 helical membrane-spanning segments follow: residues 167–187 (VPTFLYESMWNLIGFVIIMVW), 194–214 (LVDGDIISFYLIWYGCGRLVI), and 226–246 (GIRVSQYMSVLLIIIAIVFIF).

Belongs to the Lgt family.

Its subcellular location is the cell membrane. The catalysed reaction is L-cysteinyl-[prolipoprotein] + a 1,2-diacyl-sn-glycero-3-phospho-(1'-sn-glycerol) = an S-1,2-diacyl-sn-glyceryl-L-cysteinyl-[prolipoprotein] + sn-glycerol 1-phosphate + H(+). Its pathway is protein modification; lipoprotein biosynthesis (diacylglyceryl transfer). Functionally, catalyzes the transfer of the diacylglyceryl group from phosphatidylglycerol to the sulfhydryl group of the N-terminal cysteine of a prolipoprotein, the first step in the formation of mature lipoproteins. The protein is Phosphatidylglycerol--prolipoprotein diacylglyceryl transferase of Streptococcus equi subsp. equi (strain 4047).